The sequence spans 785 residues: Protein translocase subunit SecA 3 (785 aa).

ATP-binding positions include Gln-98, 116 to 120 (GEGKT), and Asp-505.

It belongs to the SecA family. As to quaternary structure, monomer and homodimer. Part of the essential Sec protein translocation apparatus which comprises SecA, SecYEG and auxiliary proteins SecDF. Other proteins may also be involved.

The protein resides in the cell membrane. The protein localises to the cytoplasm. It carries out the reaction ATP + H2O + cellular proteinSide 1 = ADP + phosphate + cellular proteinSide 2.. Its function is as follows. Part of the Sec protein translocase complex. Interacts with the SecYEG preprotein conducting channel. Has a central role in coupling the hydrolysis of ATP to the transfer of proteins into and across the cell membrane, serving as an ATP-driven molecular motor driving the stepwise translocation of polypeptide chains across the membrane. The polypeptide is Protein translocase subunit SecA 3 (Mycolicibacterium vanbaalenii (strain DSM 7251 / JCM 13017 / BCRC 16820 / KCTC 9966 / NRRL B-24157 / PYR-1) (Mycobacterium vanbaalenii)).